The chain runs to 453 residues: RuvB-like helicase 1 (453 aa).

Residue 71–78 coordinates ATP; the sequence is GGPGTGKT.

The protein belongs to the RuvB family. As to quaternary structure, may form heterododecamers with RVB2. Component of the SWR1 chromatin remodeling complex, the INO80 chromatin remodeling complex, and of the R2TP complex.

The protein resides in the nucleus. It catalyses the reaction ATP + H2O = ADP + phosphate + H(+). Its function is as follows. DNA helicase which participates in several chromatin remodeling complexes, including the SWR1 and the INO80 complexes. The SWR1 complex mediates the ATP-dependent exchange of histone H2A for the H2A variant HZT1 leading to transcriptional regulation of selected genes by chromatin remodeling. The INO80 complex remodels chromatin by shifting nucleosomes and is involved in DNA repair. Also involved in pre-rRNA processing. The sequence is that of RuvB-like helicase 1 (RVB1) from Yarrowia lipolytica (strain CLIB 122 / E 150) (Yeast).